Here is a 139-residue protein sequence, read N- to C-terminus: NADH-quinone oxidoreductase subunit A (139 aa).

Transmembrane regions (helical) follow at residues 11–31, 70–90, and 97–117; these read LWPLLLYFELVLVVVGTMLAL, LIAIFFVIFDLEAVFIFAWAI, and WPGYIEILIFIGVLVATLVYL.

The protein belongs to the complex I subunit 3 family. NDH-1 is composed of 14 different subunits. Subunits NuoA, H, J, K, L, M, N constitute the membrane sector of the complex.

It is found in the cell inner membrane. It carries out the reaction a quinone + NADH + 5 H(+)(in) = a quinol + NAD(+) + 4 H(+)(out). Its function is as follows. NDH-1 shuttles electrons from NADH, via FMN and iron-sulfur (Fe-S) centers, to quinones in the respiratory chain. The immediate electron acceptor for the enzyme in this species is believed to be ubiquinone. Couples the redox reaction to proton translocation (for every two electrons transferred, four hydrogen ions are translocated across the cytoplasmic membrane), and thus conserves the redox energy in a proton gradient. In Methylococcus capsulatus (strain ATCC 33009 / NCIMB 11132 / Bath), this protein is NADH-quinone oxidoreductase subunit A.